A 371-amino-acid polypeptide reads, in one-letter code: NADP-dependent oxidoreductase lnaE (371 aa).

Residues 172-175 (DEIG), Lys198, Tyr214, Asn237, 277-283 (YGTIAEQ), and 307-309 (FGL) each bind NADP(+).

It belongs to the NADP-dependent oxidoreductase L4BD family.

The protein operates within secondary metabolite biosynthesis. Its function is as follows. NADP-dependent oxidoreductase; part of the lna gene cluster that mediates the biosynthesis of diastereomeric piperazines. Lna and lnb clusters encode sets of enzymes that produce overlapping sets of previously undescribed metabolites such as piperazinomycin-like metabolites or morpholine. The lna and lnb biosynthetic pathways appear to be part of a signaling network that controls the formation of sclerotia, a resilient overwintering structure. One primary function of the non-canonical nonribosomal peptide synthetases lnaA and lnbA consists in the reduction of L-tyrosine. The presence in the clusters of tailoring enzymes such as the oxidoreductases lnaB, lnbB, lnaE or lnbE, as well as of the cytochrome P450 monooxygenases lnaC, lnaD, or lnbC, might explain formation of various diastereomeric piperazines. This is NADP-dependent oxidoreductase lnaE from Aspergillus flavus (strain ATCC 200026 / FGSC A1120 / IAM 13836 / NRRL 3357 / JCM 12722 / SRRC 167).